Consider the following 570-residue polypeptide: Coiled-coil domain-containing protein 22 homolog (570 aa).

Disordered stretches follow at residues 110-129 and 234-280; these read RQSE…REQL and LTST…PLEL. Polar residues predominate over residues 248 to 257; sequence TSPTQTSTTA. Positions 265–276 are enriched in low complexity; it reads SSEATATSTTTT. Coiled coils occupy residues 308–471 and 529–570; these read ELKI…LQRQ and GEKL…ITVG.

Belongs to the CCDC22 family.

The chain is Coiled-coil domain-containing protein 22 homolog from Drosophila willistoni (Fruit fly).